Here is a 341-residue protein sequence, read N- to C-terminus: NADH-quinone oxidoreductase subunit H (341 aa).

The next 8 membrane-spanning stretches (helical) occupy residues leucine 16–tyrosine 36, valine 86–isoleucine 106, valine 119–glycine 139, isoleucine 165–valine 185, methionine 191–glutamate 211, glycine 254–leucine 274, isoleucine 276–valine 296, and valine 315–glycine 335.

This sequence belongs to the complex I subunit 1 family. As to quaternary structure, NDH-1 is composed of 14 different subunits. Subunits NuoA, H, J, K, L, M, N constitute the membrane sector of the complex.

The protein localises to the cell inner membrane. The enzyme catalyses a quinone + NADH + 5 H(+)(in) = a quinol + NAD(+) + 4 H(+)(out). In terms of biological role, NDH-1 shuttles electrons from NADH, via FMN and iron-sulfur (Fe-S) centers, to quinones in the respiratory chain. The immediate electron acceptor for the enzyme in this species is believed to be ubiquinone. Couples the redox reaction to proton translocation (for every two electrons transferred, four hydrogen ions are translocated across the cytoplasmic membrane), and thus conserves the redox energy in a proton gradient. This subunit may bind ubiquinone. The polypeptide is NADH-quinone oxidoreductase subunit H (Paramagnetospirillum magneticum (strain ATCC 700264 / AMB-1) (Magnetospirillum magneticum)).